An 88-amino-acid chain; its full sequence is Large ribosomal subunit protein eL31 (88 aa).

It belongs to the eukaryotic ribosomal protein eL31 family.

In Methanoregula boonei (strain DSM 21154 / JCM 14090 / 6A8), this protein is Large ribosomal subunit protein eL31.